Consider the following 264-residue polypeptide: Thymidylate synthase (264 aa).

Arginine 21 serves as a coordination point for dUMP. Histidine 51 provides a ligand contact to (6R)-5,10-methylene-5,6,7,8-tetrahydrofolate. 126 to 127 (RR) is a binding site for dUMP. Cysteine 146 functions as the Nucleophile in the catalytic mechanism. DUMP is bound by residues 166–169 (RSAD), asparagine 177, and 207–209 (HLY). Aspartate 169 is a (6R)-5,10-methylene-5,6,7,8-tetrahydrofolate binding site. (6R)-5,10-methylene-5,6,7,8-tetrahydrofolate is bound at residue alanine 263.

This sequence belongs to the thymidylate synthase family. Bacterial-type ThyA subfamily. In terms of assembly, homodimer.

The protein resides in the cytoplasm. The enzyme catalyses dUMP + (6R)-5,10-methylene-5,6,7,8-tetrahydrofolate = 7,8-dihydrofolate + dTMP. The protein operates within pyrimidine metabolism; dTTP biosynthesis. Its function is as follows. Catalyzes the reductive methylation of 2'-deoxyuridine-5'-monophosphate (dUMP) to 2'-deoxythymidine-5'-monophosphate (dTMP) while utilizing 5,10-methylenetetrahydrofolate (mTHF) as the methyl donor and reductant in the reaction, yielding dihydrofolate (DHF) as a by-product. This enzymatic reaction provides an intracellular de novo source of dTMP, an essential precursor for DNA biosynthesis. This is Thymidylate synthase from Allorhizobium ampelinum (strain ATCC BAA-846 / DSM 112012 / S4) (Agrobacterium vitis (strain S4)).